We begin with the raw amino-acid sequence, 155 residues long: Deoxyuridine 5'-triphosphate nucleotidohydrolase (155 aa).

Residues 74–76 (RSG), asparagine 87, and 91–93 (LID) contribute to the substrate site.

The protein belongs to the dUTPase family. It depends on Mg(2+) as a cofactor.

The catalysed reaction is dUTP + H2O = dUMP + diphosphate + H(+). Its pathway is pyrimidine metabolism; dUMP biosynthesis; dUMP from dCTP (dUTP route): step 2/2. In terms of biological role, this enzyme is involved in nucleotide metabolism: it produces dUMP, the immediate precursor of thymidine nucleotides and it decreases the intracellular concentration of dUTP so that uracil cannot be incorporated into DNA. The polypeptide is Deoxyuridine 5'-triphosphate nucleotidohydrolase (Xanthomonas axonopodis pv. citri (strain 306)).